The chain runs to 398 residues: Selenide, water dikinase (398 aa).

Positions 1-21 (MSHKRPQSSAGESNGAVDLKT) are disordered. C46 is an active-site residue. ATP-binding positions include K49, 72–74 (GMD), D97, D120, and 171–174 (GGQT). D74 serves as a coordination point for Mg(2+). D120 is a binding site for Mg(2+). Position 278 (D278) interacts with Mg(2+).

This sequence belongs to the selenophosphate synthase 1 family. Class I subfamily. As to quaternary structure, homodimer. It depends on Mg(2+) as a cofactor.

It carries out the reaction hydrogenselenide + ATP + H2O = selenophosphate + AMP + phosphate + 2 H(+). Synthesizes selenophosphate from selenide and ATP. The sequence is that of Selenide, water dikinase from Leishmania major.